We begin with the raw amino-acid sequence, 380 residues long: Queuine tRNA-ribosyltransferase (380 aa).

Aspartate 96 functions as the Proton acceptor in the catalytic mechanism. Substrate contacts are provided by residues 96–100 (DSGGF), aspartate 150, glutamine 193, and glycine 220. The tract at residues 251-257 (GVGAPDS) is RNA binding. Aspartate 270 functions as the Nucleophile in the catalytic mechanism. The interval 275-279 (TRIAR) is RNA binding; important for wobble base 34 recognition. The Zn(2+) site is built by cysteine 308, cysteine 310, cysteine 313, and histidine 339.

Belongs to the queuine tRNA-ribosyltransferase family. Homodimer. Within each dimer, one monomer is responsible for RNA recognition and catalysis, while the other monomer binds to the replacement base PreQ1. Requires Zn(2+) as cofactor.

It carries out the reaction 7-aminomethyl-7-carbaguanine + guanosine(34) in tRNA = 7-aminomethyl-7-carbaguanosine(34) in tRNA + guanine. It functions in the pathway tRNA modification; tRNA-queuosine biosynthesis. Functionally, catalyzes the base-exchange of a guanine (G) residue with the queuine precursor 7-aminomethyl-7-deazaguanine (PreQ1) at position 34 (anticodon wobble position) in tRNAs with GU(N) anticodons (tRNA-Asp, -Asn, -His and -Tyr). Catalysis occurs through a double-displacement mechanism. The nucleophile active site attacks the C1' of nucleotide 34 to detach the guanine base from the RNA, forming a covalent enzyme-RNA intermediate. The proton acceptor active site deprotonates the incoming PreQ1, allowing a nucleophilic attack on the C1' of the ribose to form the product. After dissociation, two additional enzymatic reactions on the tRNA convert PreQ1 to queuine (Q), resulting in the hypermodified nucleoside queuosine (7-(((4,5-cis-dihydroxy-2-cyclopenten-1-yl)amino)methyl)-7-deazaguanosine). The chain is Queuine tRNA-ribosyltransferase from Streptococcus pyogenes serotype M49 (strain NZ131).